The chain runs to 244 residues: MGDLFSLFWEVDPPPIPLNCAIPNQDYECRKDDSCGTIGNFLLWYFVIVFVLMFFSRASVWMSEDKKDEGSGTSTSVRKASKETSYKWQSKDGAWDPSQTMKKPKQNQLTPVTNSEVALVNAYLEQRRARRQSQFNEVNQNQHDSDTTECGSEESNSEASSWKESESEHHPSPDSIKRRKMAQRQRNLGSYQMSERHCLHCKAMRTNEWLVHHSQQKASVTPPMKGDSPEESSISDINTKFSKF.

Residues 35–55 (CGTIGNFLLWYFVIVFVLMFF) traverse the membrane as a helical segment. 3 disordered regions span residues 65–112 (DKKD…LTPV), 132–191 (QSQF…LGSY), and 213–244 (HSQQKASVTPPMKGDSPEESSISDINTKFSKF). The span at 80 to 94 (ASKETSYKWQSKDGA) shows a compositional bias: basic and acidic residues. Composition is skewed to polar residues over residues 97–112 (PSQTMKKPKQNQLTPV) and 132–142 (QSQFNEVNQNQ). Residues 161-176 (SWKESESEHHPSPDSI) are compositionally biased toward basic and acidic residues. Polar residues predominate over residues 231–244 (ESSISDINTKFSKF).

It is found in the membrane. The sequence is that of Serine-rich single-pass membrane protein 1 (SSMEM1) from Macaca fascicularis (Crab-eating macaque).